The primary structure comprises 199 residues: Inner membrane-spanning protein YciB (199 aa).

The next 5 membrane-spanning stretches (helical) occupy residues 3 to 23, 47 to 67, 76 to 96, 119 to 139, and 149 to 169; these read LLID…WGIY, VEPM…ATLL, WKPS…QLVF, LNWS…VIAY, and FKLF…AIYM. The segment at 180–199 is disordered; sequence AAAATPDALPPPGVQQDKQP.

It belongs to the YciB family.

It localises to the cell inner membrane. Plays a role in cell envelope biogenesis, maintenance of cell envelope integrity and membrane homeostasis. This is Inner membrane-spanning protein YciB from Delftia acidovorans (strain DSM 14801 / SPH-1).